Reading from the N-terminus, the 150-residue chain is Large ribosomal subunit protein bL9 (150 aa).

Belongs to the bacterial ribosomal protein bL9 family.

Binds to the 23S rRNA. In Streptococcus pyogenes serotype M6 (strain ATCC BAA-946 / MGAS10394), this protein is Large ribosomal subunit protein bL9.